The chain runs to 434 residues: Nicotinate phosphoribosyltransferase (434 aa).

His242 bears the Phosphohistidine; by autocatalysis mark.

This sequence belongs to the NAPRTase family. In terms of processing, transiently phosphorylated on a His residue during the reaction cycle. Phosphorylation strongly increases the affinity for substrates and increases the rate of nicotinate D-ribonucleotide production. Dephosphorylation regenerates the low-affinity form of the enzyme, leading to product release.

The enzyme catalyses nicotinate + 5-phospho-alpha-D-ribose 1-diphosphate + ATP + H2O = nicotinate beta-D-ribonucleotide + ADP + phosphate + diphosphate. It functions in the pathway cofactor biosynthesis; NAD(+) biosynthesis; nicotinate D-ribonucleotide from nicotinate: step 1/1. Functionally, catalyzes the synthesis of beta-nicotinate D-ribonucleotide from nicotinate and 5-phospho-D-ribose 1-phosphate at the expense of ATP. This is Nicotinate phosphoribosyltransferase from Bartonella tribocorum (strain CIP 105476 / IBS 506).